The primary structure comprises 205 residues: RNA pyrophosphohydrolase (205 aa).

Residues 6 to 149 (GFRPNVGIVL…KRGVYARALR (144 aa)) enclose the Nudix hydrolase domain. Residues 38–59 (GGMNTDETPVEAMYRELREETG) carry the Nudix box motif. The segment at 178–205 (GSSAAGHDSPRKRPRKRNGARAMRINND) is disordered. A compositionally biased stretch (basic residues) spans 187–196 (PRKRPRKRNG).

It belongs to the Nudix hydrolase family. RppH subfamily. A divalent metal cation is required as a cofactor.

In terms of biological role, accelerates the degradation of transcripts by removing pyrophosphate from the 5'-end of triphosphorylated RNA, leading to a more labile monophosphorylated state that can stimulate subsequent ribonuclease cleavage. This chain is RNA pyrophosphohydrolase, found in Xanthomonas axonopodis pv. citri (strain 306).